A 41-amino-acid chain; its full sequence is Photosystem II reaction center protein Y (41 aa).

Residues 5 to 23 form a helical membrane-spanning segment; it reads VLIVLAPVIIAGSWALFNI.

The protein belongs to the PsbY family. As to quaternary structure, PSII is composed of 1 copy each of membrane proteins PsbA, PsbB, PsbC, PsbD, PsbE, PsbF, PsbH, PsbI, PsbJ, PsbK, PsbL, PsbM, PsbT, PsbX, PsbY, PsbZ, Psb30/Ycf12, peripheral proteins PsbO, CyanoQ (PsbQ), PsbU, PsbV and a large number of cofactors. It forms dimeric complexes.

It localises to the cellular thylakoid membrane. In terms of biological role, loosely associated component of the core of photosystem II (PSII), it is not always seen in crystals. PSII is a light-driven water plastoquinone oxidoreductase, using light energy to abstract electrons from H(2)O, generating a proton gradient subsequently used for ATP formation. The protein is Photosystem II reaction center protein Y of Gloeothece citriformis (strain PCC 7424) (Cyanothece sp. (strain PCC 7424)).